Here is a 913-residue protein sequence, read N- to C-terminus: Rab GTPase-activating protein tbc-8 (913 aa).

The interval 1–24 is disordered; it reads MQMFRHSSADMWRAKKPTLERRST. The RUN domain occupies 106 to 240; that stretch reads NLNSPYVTSL…TYRRMSNRIE (135 aa). The region spanning 597–844 is the Rab-GAP TBC domain; the sequence is INTKEVRRMA…KVWEVIWAAQ (248 aa).

Belongs to the RUTBC family. As to quaternary structure, interacts with rab-19. Interacts with ric-19; the interaction is direct and may be required for the activation of rab-2 and dense vesicle maturation in cholinergic motoneurons. Interacts (via RUN domain) with rund-1. Does not interact with unc-108 (GTP-bound form). Expressed in neurons in the head, tail and ventral nerve cord (at protein level).

The protein localises to the golgi apparatus. It localises to the trans-Golgi network. It is found in the early endosome. Its subcellular location is the cytoplasmic vesicle membrane. Interacts with numerous Rab family members, functioning as Rab effector for some, and as GTPase activator for others. GTPase activator for rab-2. In association with ric-19 activates rab-2 during dense core vesicle maturation in cholinergic motoneurons. The chain is Rab GTPase-activating protein tbc-8 from Caenorhabditis elegans.